The primary structure comprises 617 residues: LEAF RUST 10 DISEASE-RESISTANCE LOCUS RECEPTOR-LIKE PROTEIN KINASE-like 2.4 (617 aa).

A signal peptide spans 1-26; the sequence is MYYLPSSCLVLFLFFSLFYHLPCASS. Over 27-243 the chain is Extracellular; the sequence is KQTLGWCESQ…LPTRLSSEAK (217 aa). Residues asparagine 41, asparagine 69, asparagine 86, asparagine 112, and asparagine 184 are each glycosylated (N-linked (GlcNAc...) asparagine). The chain crosses the membrane as a helical span at residues 244–264; it reads IATIAGVSLLPFLVLTLVVHI. The Cytoplasmic segment spans residues 265–617; that stretch reads IRKQKTSNDK…SEENSISSEI (353 aa). Positions 307–594 constitute a Protein kinase domain; it reads NSFAEVVGRG…ALEVPPRPVL (288 aa). Residues 313 to 321 and lysine 335 contribute to the ATP site; that span reads VGRGGFGIV. Tyrosine 380 carries the post-translational modification Phosphotyrosine. The active-site Proton acceptor is the aspartate 431. A phosphothreonine mark is found at threonine 468 and threonine 471.

It belongs to the protein kinase superfamily. Ser/Thr protein kinase family.

The protein localises to the membrane. The catalysed reaction is L-seryl-[protein] + ATP = O-phospho-L-seryl-[protein] + ADP + H(+). It catalyses the reaction L-threonyl-[protein] + ATP = O-phospho-L-threonyl-[protein] + ADP + H(+). This Arabidopsis thaliana (Mouse-ear cress) protein is LEAF RUST 10 DISEASE-RESISTANCE LOCUS RECEPTOR-LIKE PROTEIN KINASE-like 2.4.